The following is a 383-amino-acid chain: Succinyl-diaminopimelate desuccinylase (383 aa).

Histidine 69 is a binding site for Zn(2+). The active site involves aspartate 71. Aspartate 103 is a Zn(2+) binding site. The active-site Proton acceptor is the glutamate 137. Zn(2+) contacts are provided by glutamate 138, glutamate 166, and histidine 357.

The protein belongs to the peptidase M20A family. DapE subfamily. Homodimer. The cofactor is Zn(2+). It depends on Co(2+) as a cofactor.

It catalyses the reaction N-succinyl-(2S,6S)-2,6-diaminopimelate + H2O = (2S,6S)-2,6-diaminopimelate + succinate. Its pathway is amino-acid biosynthesis; L-lysine biosynthesis via DAP pathway; LL-2,6-diaminopimelate from (S)-tetrahydrodipicolinate (succinylase route): step 3/3. Functionally, catalyzes the hydrolysis of N-succinyl-L,L-diaminopimelic acid (SDAP), forming succinate and LL-2,6-diaminopimelate (DAP), an intermediate involved in the bacterial biosynthesis of lysine and meso-diaminopimelic acid, an essential component of bacterial cell walls. The polypeptide is Succinyl-diaminopimelate desuccinylase (Rickettsia typhi (strain ATCC VR-144 / Wilmington)).